Consider the following 378-residue polypeptide: Chaperone protein DnaJ (378 aa).

Positions 5-69 constitute a J domain; the sequence is EFYDRLGVSK…QKRAAYDQYG (65 aa). The CR-type zinc finger occupies 135–217; it reads GTEKEVKYHR…CHGTGHEKQA (83 aa). Positions 148, 151, 165, 168, 191, 194, 205, and 208 each coordinate Zn(2+). CXXCXGXG motif repeat units follow at residues 148–155, 165–172, 191–198, and 205–212; these read CRTCNGSG, CGRCHGAG, CDVCHGRG, and CTTCHGTG.

This sequence belongs to the DnaJ family. In terms of assembly, homodimer. Requires Zn(2+) as cofactor.

The protein localises to the cytoplasm. Participates actively in the response to hyperosmotic and heat shock by preventing the aggregation of stress-denatured proteins and by disaggregating proteins, also in an autonomous, DnaK-independent fashion. Unfolded proteins bind initially to DnaJ; upon interaction with the DnaJ-bound protein, DnaK hydrolyzes its bound ATP, resulting in the formation of a stable complex. GrpE releases ADP from DnaK; ATP binding to DnaK triggers the release of the substrate protein, thus completing the reaction cycle. Several rounds of ATP-dependent interactions between DnaJ, DnaK and GrpE are required for fully efficient folding. Also involved, together with DnaK and GrpE, in the DNA replication of plasmids through activation of initiation proteins. The sequence is that of Chaperone protein DnaJ from Streptococcus pneumoniae serotype 4 (strain ATCC BAA-334 / TIGR4).